We begin with the raw amino-acid sequence, 119 residues long: Ribonuclease P protein component (119 aa).

It belongs to the RnpA family. As to quaternary structure, consists of a catalytic RNA component (M1 or rnpB) and a protein subunit.

It carries out the reaction Endonucleolytic cleavage of RNA, removing 5'-extranucleotides from tRNA precursor.. In terms of biological role, RNaseP catalyzes the removal of the 5'-leader sequence from pre-tRNA to produce the mature 5'-terminus. It can also cleave other RNA substrates such as 4.5S RNA. The protein component plays an auxiliary but essential role in vivo by binding to the 5'-leader sequence and broadening the substrate specificity of the ribozyme. The chain is Ribonuclease P protein component from Pectobacterium atrosepticum (strain SCRI 1043 / ATCC BAA-672) (Erwinia carotovora subsp. atroseptica).